Reading from the N-terminus, the 424-residue chain is ATP-dependent RNA helicase WM6 (424 aa).

Positions 1–16 (MADNDDLLDYEDEEQT) are enriched in acidic residues. The interval 1 to 27 (MADNDDLLDYEDEEQTETTAVENQEAP) is disordered. Positions 41-69 (SGFRDFLLKPEILRAIVDCGFEHPSEVQH) match the Q motif motif. A Helicase ATP-binding domain is found at 72–246 (IPQAVLGMDI…KKFMQDPMEV (175 aa)). Position 85 to 92 (85 to 92 (AKSGMGKT)) interacts with ATP. The DECD box motif lies at 193 to 196 (DECD). The 162-residue stretch at 258 to 419 (GLQQHYVNLK…ELPEEIDLST (162 aa)) folds into the Helicase C-terminal domain.

It belongs to the DEAD box helicase family. DECD subfamily. Component of the spliceosome. Interacts with the exon junction complex.

It localises to the nucleus speckle. The enzyme catalyses ATP + H2O = ADP + phosphate + H(+). Its function is as follows. Required for mRNA export out of the nucleus. Probable RNA helicase that may regulate entry into mitosis by down-regulating the expression of other genes whose activity may be rate-limiting for entry into mitosis during embryogenesis. Binds to salivary gland chromosomes and modifies position effect variegation. Promotes an open chromatin structure that favors transcription during development by regulating the spread of heterochromatin. The sequence is that of ATP-dependent RNA helicase WM6 (Hel25E) from Drosophila melanogaster (Fruit fly).